Here is a 382-residue protein sequence, read N- to C-terminus: MKGISVLGATGSIGTQTLDVLANHRDKFRLVAMSVGKNLTLAEEQIHQFKPPLVSVMTDEDRKTLASKVPEGTRVVCGEEGLIEVATAEKAEILVNAVIGSVGLAPTLAAIEAKKTIALANKETLVTAGHLVTEKAREHGVKLLPVDSEHSAIFQALQGERMDRLHRIIITASGGSFRDKSRDELNGVTVEDALKHPNWSMGAKITIDSATMMNKGLEVIEAHWLFNLPYEKIDVLLHKESIIHSMVEFVDRSVIAQLGTPDMRVPIQYALSYPDRLEFHEGQQLNLWEVGKLHFAPLDMERFRCMAFAYESGKQGGTMPTVLNAANEEAVELFLNNQLSFLGIEDVIEKALERHERIDSPSLADILHVDQETRAFVHSLIK.

Residues Thr-10, Gly-11, Ser-12, Ile-13, Gly-36, Lys-37, Asn-38, and Asn-121 each coordinate NADPH. Position 122 (Lys-122) interacts with 1-deoxy-D-xylulose 5-phosphate. Glu-123 provides a ligand contact to NADPH. Asp-147 serves as a coordination point for Mn(2+). 4 residues coordinate 1-deoxy-D-xylulose 5-phosphate: Ser-148, Glu-149, Ser-173, and His-196. Glu-149 lines the Mn(2+) pocket. Residue Gly-202 participates in NADPH binding. Residues Ser-209, Asn-214, Lys-215, and Glu-218 each coordinate 1-deoxy-D-xylulose 5-phosphate. Residue Glu-218 participates in Mn(2+) binding.

The protein belongs to the DXR family. It depends on Mg(2+) as a cofactor. The cofactor is Mn(2+).

It carries out the reaction 2-C-methyl-D-erythritol 4-phosphate + NADP(+) = 1-deoxy-D-xylulose 5-phosphate + NADPH + H(+). It participates in isoprenoid biosynthesis; isopentenyl diphosphate biosynthesis via DXP pathway; isopentenyl diphosphate from 1-deoxy-D-xylulose 5-phosphate: step 1/6. Catalyzes the NADPH-dependent rearrangement and reduction of 1-deoxy-D-xylulose-5-phosphate (DXP) to 2-C-methyl-D-erythritol 4-phosphate (MEP). The protein is 1-deoxy-D-xylulose 5-phosphate reductoisomerase of Halalkalibacterium halodurans (strain ATCC BAA-125 / DSM 18197 / FERM 7344 / JCM 9153 / C-125) (Bacillus halodurans).